Consider the following 150-residue polypeptide: Large ribosomal subunit protein bL9 (150 aa).

Belongs to the bacterial ribosomal protein bL9 family.

Binds to the 23S rRNA. The polypeptide is Large ribosomal subunit protein bL9 (Leptothrix cholodnii (strain ATCC 51168 / LMG 8142 / SP-6) (Leptothrix discophora (strain SP-6))).